Consider the following 169-residue polypeptide: Large ribosomal subunit protein uL18 (169 aa).

Belongs to the universal ribosomal protein uL18 family. In terms of assembly, part of the 50S ribosomal subunit. Contacts the 5S and 23S rRNAs.

This is one of the proteins that bind and probably mediate the attachment of the 5S RNA into the large ribosomal subunit, where it forms part of the central protuberance. In Methanothrix thermoacetophila (strain DSM 6194 / JCM 14653 / NBRC 101360 / PT) (Methanosaeta thermophila), this protein is Large ribosomal subunit protein uL18.